Here is a 1397-residue protein sequence, read N- to C-terminus: ABC transporter G family member 41 (1397 aa).

Residues 138-411 form the ABC transporter 1 domain; that stretch reads SLSKFVCSKK…FEGCGFKCPE (274 aa). ATP is bound at residue 171-178; the sequence is GPPGCGKT. Residues 489-701 form the ABC transmembrane type-2 1 domain; it reads EMLKACSRRE…AEIGLTANEF (213 aa). 6 helical membrane passes run 507-527, 549-570, 594-614, 625-645, 651-671, and 735-755; these read FIYL…MTVF, ALFR…RLGV, IPLS…VIGY, FIIL…IASI, ACSI…GFVI, and TAFG…TLAL. Residues 805-1050 enclose the ABC transporter 2 domain; sequence VTFQNVQYYI…VIKYFESIPG (246 aa). Residue 842–849 participates in ATP binding; it reads GVSGAGKT. The region spanning 1122–1336 is the ABC transmembrane type-2 2 domain; that stretch reads GQLKACLWKQ…VLEGLLSSQY (215 aa). 7 helical membrane-spanning segments follow: residues 1141-1161, 1173-1193, 1229-1249, 1260-1280, 1286-1306, 1314-1334, and 1369-1389; these read HNLT…LLFW, LFSI…NNCA, VPYS…MIGY, LYSI…MVAL, MALT…GFVM, WWIW…LLSS, and VVAF…AFFM.

Belongs to the ABC transporter superfamily. ABCG family. PDR (TC 3.A.1.205) subfamily. Confined to roots.

It localises to the membrane. In terms of biological role, may be a general defense protein. This chain is ABC transporter G family member 41 (ABCG41), found in Arabidopsis thaliana (Mouse-ear cress).